The chain runs to 205 residues: Urease accessory protein UreG (205 aa).

Residue 11-18 (GPVGSGKT) coordinates GTP.

Belongs to the SIMIBI class G3E GTPase family. UreG subfamily. In terms of assembly, homodimer. UreD, UreF and UreG form a complex that acts as a GTP-hydrolysis-dependent molecular chaperone, activating the urease apoprotein by helping to assemble the nickel containing metallocenter of UreC. The UreE protein probably delivers the nickel.

The protein localises to the cytoplasm. Facilitates the functional incorporation of the urease nickel metallocenter. This process requires GTP hydrolysis, probably effectuated by UreG. In Prochlorococcus marinus (strain NATL2A), this protein is Urease accessory protein UreG.